Here is a 123-residue protein sequence, read N- to C-terminus: ATP synthase epsilon chain (123 aa).

Belongs to the ATPase epsilon chain family. F-type ATPases have 2 components, CF(1) - the catalytic core - and CF(0) - the membrane proton channel. CF(1) has five subunits: alpha(3), beta(3), gamma(1), delta(1), epsilon(1). CF(0) has three main subunits: a, b and c.

Its subcellular location is the cell inner membrane. Its function is as follows. Produces ATP from ADP in the presence of a proton gradient across the membrane. The protein is ATP synthase epsilon chain of Helicobacter acinonychis (strain Sheeba).